Consider the following 304-residue polypeptide: 1D-myo-inositol 2-acetamido-2-deoxy-alpha-D-glucopyranoside deacetylase 2 (304 aa).

Zn(2+) is bound by residues His17, Asp20, and His152.

It belongs to the MshB deacetylase family. Zn(2+) serves as cofactor.

It carries out the reaction 1D-myo-inositol 2-acetamido-2-deoxy-alpha-D-glucopyranoside + H2O = 1D-myo-inositol 2-amino-2-deoxy-alpha-D-glucopyranoside + acetate. Its function is as follows. Catalyzes the deacetylation of 1D-myo-inositol 2-acetamido-2-deoxy-alpha-D-glucopyranoside (GlcNAc-Ins) in the mycothiol biosynthesis pathway. This Catenulispora acidiphila (strain DSM 44928 / JCM 14897 / NBRC 102108 / NRRL B-24433 / ID139908) protein is 1D-myo-inositol 2-acetamido-2-deoxy-alpha-D-glucopyranoside deacetylase 2.